Here is a 151-residue protein sequence, read N- to C-terminus: Chemokine-like factor (151 aa).

An MARVEL domain is found at 13-133 (FCLSLKCFVK…DCALMCQKLR (121 aa)). 4 helical membrane-spanning segments follow: residues 19 to 39 (CFVK…FIVA), 45 to 65 (YIVI…LYMC), 74 to 94 (FFWP…MLIV), and 107 to 127 (IMVG…DCAL). Asn-142 carries N-linked (GlcNAc...) asparagine glycosylation.

This sequence belongs to the chemokine-like factor family. Both isoforms have highest expression levels in testis with relatively lower expression level in liver, spleen, lung, brain and heart and barely detectable levels in skeletal muscle and kidney were barely detected. In most tissues, isoform CKLF2 has higher expression levels than isoform CKLF1.

Its subcellular location is the secreted. It localises to the membrane. May play an important role in inflammation and regeneration of skeletal muscle. Essential for embryonic development. Functionally, has chemotactic response in monocytes, neutrophils and lymphocytes. Binds CCR4. This is Chemokine-like factor (Cklf) from Rattus norvegicus (Rat).